Reading from the N-terminus, the 433-residue chain is Shikimate O-hydroxycinnamoyltransferase (433 aa).

The active-site Proton acceptor is His153. Residues 252-255 (SSYE), 284-290 (DGRSRLR), and 370-373 (SWVR) each bind 4-coumaroyl-CoA. The active-site Proton acceptor is Asp380.

Belongs to the plant acyltransferase family.

It carries out the reaction shikimate + 4-coumaroyl-CoA = trans-4-coumaroylshikimate + CoA. Acyltransferase involved in the biosynthesis of lignin. Accepts caffeoyl-CoA and p-coumaroyl-CoA as substrates and transfers the acyl group on both shikimate and quinate acceptors. The chain is Shikimate O-hydroxycinnamoyltransferase (HST) from Arabidopsis thaliana (Mouse-ear cress).